The sequence spans 509 residues: GRAS family protein RAD1 (509 aa).

A GRAS domain is found at 125–508 (EDGCADGMRL…KPIVAASCWK (384 aa)). Positions 132–198 (MRLVQLLIAC…IQPIGSGAGV (67 aa)) are leucine repeat I (LRI). Residues 217 to 286 (YRLVYETCPH…SGHGRVRRLR (70 aa)) form a VHIID region. The VHIID motif lies at 248–252 (VHVVD). A leucine repeat II (LRII) region spans residues 299–331 (AIGDELSDYANNLGINLEFSVVQKNLENLQPED). Residues 340–431 (LVVNSILQLH…QFYFAEEIKN (92 aa)) are PFYRE. Positions 434 to 508 (SCEGPLRMER…KPIVAASCWK (75 aa)) are SAW.

This sequence belongs to the GRAS family. As to quaternary structure, interacts with RAM1 and NSP2. Expressed in roots under low phosphate (Pi) conditions.

It is found in the nucleus. Its function is as follows. Transcription factor acting as a regulator of arbuscular mycorrhiza (AM)-related genes (e.g. PT4, STR and RAM2). Required for the morphogenesis of arbuscules upon symbiosis with AM fungi (e.g. Rhizophagus irregularis). Also involved in restricting mycorrhizal colonization of the root meristem. The polypeptide is GRAS family protein RAD1 (Lotus japonicus (Lotus corniculatus var. japonicus)).